A 32-amino-acid chain; its full sequence is Ovostatin (32 aa).

A cross-link (isoglutamyl cysteine thioester (Cys-Gln)) is located at residues 27–30; sequence CGEQ.

This sequence belongs to the protease inhibitor I39 (alpha-2-macroglobulin) family. As to quaternary structure, homotetramer, which consists of two pairs of disulfide-linked chains.

It is found in the secreted. Its function is as follows. Is able to inhibit all four classes of proteinases by a unique 'trapping' mechanism. This protein has a peptide stretch, called the 'bait region' which contains specific cleavage sites for different proteinases. When a proteinase cleaves the bait region, a conformational change is induced in the protein which traps the proteinase. The entrapped enzyme remains active against low molecular weight substrates (activity against high molecular weight substrates is greatly reduced). Following cleavage in the bait region a thioester bond is hydrolyzed and mediates the covalent binding of the protein to the proteinase. In Anas platyrhynchos (Mallard), this protein is Ovostatin.